The sequence spans 597 residues: MAVDSLLQSGMASPTTSETEVKALKFIEEITRNPDSVQEKVLGEILSRNSNTEYLKRFDLNGAVDRKSFKSKVPVVIYEDLKTDIQRISNGDRSPILSSHPITEFLTSSGTSAGERKLMPTIEEDINRRQLLGNLLMPVMNLYVPGLDKGKGLYFLFVKSESTTSGGLPARPALTSYYKSDYFRTSDSDSVYTSPKEAILCCDSSQSMYTQMLCGLLMRHEVNRLGAVFPSGLLRAISFLQNNWKELSQDISTGTLSSKIFDHAIKTRMSNILNKPDQELAEFLIGVCSQENWEGIITKIWPNTKYLDVIVTGAMAEYIPMLEYYSGGLPMASMIYASSESYFGINLNPMCKPSEVSYTIFPNMAYFEFLPHNHDGDGGVEATSLVELADVEVGKEYELVITTYAGLYRYRVGDILRVTGFHNSAPQFKFIRRENVLLSIESDKTDEADLQKAVENASRLLAEQGTRVIEYTSYADTKTIPGHYVIYWELLSRDQSNALPSDEVMAKCCLEMEESLNAVYRQSRVSDKSIGPLEIRVVQNGTFEELMDFSISRGSSINQYKVPRCVSLTPIMKLLDSRVVSAHFSPSLPHWSPERRH.

It belongs to the IAA-amido conjugating enzyme family.

In terms of biological role, catalyzes the synthesis of indole-3-acetic acid (IAA)-amino acid conjugates, providing a mechanism for the plant to cope with the presence of excess auxin. Strongly reactive with Glu, Gln, Trp, Asp, Ala, Leu, Phe, Gly, Tyr, Met, Ile and Val. Little or no product formation with His, Ser, Thr, Arg, Lys, or Cys. Also active on pyruvic and butyric acid analogs of IAA, PAA and the synthetic auxin naphthaleneacetic acid (NAA). The two chlorinated synthetic auxin herbicides 2,4-D and 3,6-dichloro-o-anisic acid (dicamba) cannot be used as substrates. The polypeptide is Indole-3-acetic acid-amido synthetase GH3.4 (GH3.4) (Arabidopsis thaliana (Mouse-ear cress)).